Here is a 385-residue protein sequence, read N- to C-terminus: Beta sliding clamp (385 aa).

This sequence belongs to the beta sliding clamp family. As to quaternary structure, forms a ring-shaped head-to-tail homodimer around DNA which binds and tethers DNA polymerases and other proteins to the DNA. The DNA replisome complex has a single clamp-loading complex (3 tau and 1 each of delta, delta', psi and chi subunits) which binds 3 Pol III cores (1 core on the leading strand and 2 on the lagging strand) each with a beta sliding clamp dimer. Additional proteins in the replisome are other copies of gamma, psi and chi, Ssb, DNA helicase and RNA primase.

The protein localises to the cytoplasm. In terms of biological role, confers DNA tethering and processivity to DNA polymerases and other proteins. Acts as a clamp, forming a ring around DNA (a reaction catalyzed by the clamp-loading complex) which diffuses in an ATP-independent manner freely and bidirectionally along dsDNA. Initially characterized for its ability to contact the catalytic subunit of DNA polymerase III (Pol III), a complex, multichain enzyme responsible for most of the replicative synthesis in bacteria; Pol III exhibits 3'-5' exonuclease proofreading activity. The beta chain is required for initiation of replication as well as for processivity of DNA replication. The chain is Beta sliding clamp (dnaN) from Borreliella burgdorferi (strain ATCC 35210 / DSM 4680 / CIP 102532 / B31) (Borrelia burgdorferi).